Here is a 399-residue protein sequence, read N- to C-terminus: Phosphoglycerate kinase (399 aa).

Residues 22–24 (DFN), R38, 61–64 (HLGR), R120, and R153 each bind substrate. ATP is bound by residues K204, E326, and 352-355 (GGDT).

The protein belongs to the phosphoglycerate kinase family. As to quaternary structure, monomer.

The protein resides in the cytoplasm. It catalyses the reaction (2R)-3-phosphoglycerate + ATP = (2R)-3-phospho-glyceroyl phosphate + ADP. The protein operates within carbohydrate degradation; glycolysis; pyruvate from D-glyceraldehyde 3-phosphate: step 2/5. This chain is Phosphoglycerate kinase, found in Citrifermentans bemidjiense (strain ATCC BAA-1014 / DSM 16622 / JCM 12645 / Bem) (Geobacter bemidjiensis).